We begin with the raw amino-acid sequence, 550 residues long: Glucose-6-phosphate isomerase (550 aa).

Residue Glu356 is the Proton donor of the active site. Residues His387 and Lys515 contribute to the active site.

It belongs to the GPI family.

Its subcellular location is the cytoplasm. It carries out the reaction alpha-D-glucose 6-phosphate = beta-D-fructose 6-phosphate. It participates in carbohydrate biosynthesis; gluconeogenesis. The protein operates within carbohydrate degradation; glycolysis; D-glyceraldehyde 3-phosphate and glycerone phosphate from D-glucose: step 2/4. In terms of biological role, catalyzes the reversible isomerization of glucose-6-phosphate to fructose-6-phosphate. In Aliivibrio salmonicida (strain LFI1238) (Vibrio salmonicida (strain LFI1238)), this protein is Glucose-6-phosphate isomerase.